A 271-amino-acid chain; its full sequence is MVSKTWICGFISIITVVQALSCEKHDVLKKYQVGKFSSLTSTERDTPPSTTIEKWWINVCEEHNVEPPEECKKNDMLCGLTDVILPGKDAITTQIIDFDKNIGFNVEETESALTLTLKGATWGANSFDAKLEFQCNDNMKQDELTSHTWADKSIQLTLKGPSGCLKSKDDDKKNGDGDNGKDGDSEGKKPAKKAGGTSWFTWLFLYALLFTLIYLMVVSFLNTRGGSFQDFRAEFIQRSTQFLTSLPEFCKEVVSRILGRSTAQRGGYSAV.

A signal peptide spans 1-19 (MVSKTWICGFISIITVVQA). The region spanning 20–166 (LSCEKHDVLK…TLKGPSGCLK (147 aa)) is the MRH domain. The Lumenal portion of the chain corresponds to 20–199 (LSCEKHDVLK…PAKKAGGTSW (180 aa)). Disulfide bonds link Cys22-Cys60, Cys71-Cys78, and Cys135-Cys164. The interval 161-194 (PSGCLKSKDDDKKNGDGDNGKDGDSEGKKPAKKA) is disordered. Over residues 166–189 (KSKDDDKKNGDGDNGKDGDSEGKK) the composition is skewed to basic and acidic residues. A helical transmembrane segment spans residues 200–220 (FTWLFLYALLFTLIYLMVVSF). At 221 to 271 (LNTRGGSFQDFRAEFIQRSTQFLTSLPEFCKEVVSRILGRSTAQRGGYSAV) the chain is on the cytoplasmic side.

This sequence belongs to the ATG27 family. In terms of assembly, forms a complex with ATG9 and ATG23.

Its subcellular location is the cytoplasmic vesicle membrane. The protein resides in the golgi apparatus membrane. The protein localises to the mitochondrion membrane. It is found in the preautophagosomal structure membrane. Functionally, effector of VPS34 phosphatidylinositol 3-phosphate kinase signaling. Regulates the cytoplasm to vacuole transport (Cvt) vesicle formation. Plays a role in ATG protein retrieval from the pre-autophagosomal structure (PAS) and is especially required for autophagy-dependent cycling of ATG9. The protein is Autophagy-related protein 27 (ATG27) of Saccharomyces cerevisiae (strain ATCC 204508 / S288c) (Baker's yeast).